We begin with the raw amino-acid sequence, 348 residues long: Glycerol-1-phosphate dehydrogenase [NAD(P)+] (348 aa).

NAD(+) contacts are provided by residues 94–98 (GKVID) and 116–119 (TTAS). D121 is a binding site for substrate. Residue S125 participates in NAD(+) binding. D168 lines the substrate pocket. Zn(2+)-binding residues include D168 and H248. H252 is a binding site for substrate. H264 contributes to the Zn(2+) binding site.

It belongs to the glycerol-1-phosphate dehydrogenase family. Homooctamer. Zn(2+) serves as cofactor.

It is found in the cytoplasm. The enzyme catalyses sn-glycerol 1-phosphate + NAD(+) = dihydroxyacetone phosphate + NADH + H(+). The catalysed reaction is sn-glycerol 1-phosphate + NADP(+) = dihydroxyacetone phosphate + NADPH + H(+). Its pathway is membrane lipid metabolism; glycerophospholipid metabolism. Functionally, catalyzes the NAD(P)H-dependent reduction of dihydroxyacetonephosphate (DHAP or glycerone phosphate) to glycerol 1-phosphate (G1P). The G1P thus generated is used as the glycerophosphate backbone of phospholipids in the cellular membranes of Archaea. The polypeptide is Glycerol-1-phosphate dehydrogenase [NAD(P)+] (Methanobrevibacter smithii (strain ATCC 35061 / DSM 861 / OCM 144 / PS)).